Reading from the N-terminus, the 416-residue chain is Glyceraldehyde-3-phosphate dehydrogenase, chloroplastic (416 aa).

The transit peptide at 1 to 78 (MAFVAPVSSV…APARTSNAPS (78 aa)) directs the protein to the chloroplast. Residues 90–91 (RI), Asp114, and Arg158 each bind NADP(+). Residues 232-234 (SCT), Thr263, Arg278, 291-292 (TG), and Arg314 contribute to the D-glyceraldehyde 3-phosphate site. Cys233 functions as the Nucleophile in the catalytic mechanism. Asn396 provides a ligand contact to NADP(+).

Belongs to the glyceraldehyde-3-phosphate dehydrogenase family. As to quaternary structure, homotetramer.

The protein resides in the plastid. It is found in the chloroplast. It catalyses the reaction D-glyceraldehyde 3-phosphate + phosphate + NADP(+) = (2R)-3-phospho-glyceroyl phosphate + NADPH + H(+). It functions in the pathway carbohydrate biosynthesis; Calvin cycle. This is Glyceraldehyde-3-phosphate dehydrogenase, chloroplastic (GAPA) from Gracilaria gracilis (Red alga).